The chain runs to 163 residues: Nucleotide-binding protein Mmcs_0777 (163 aa).

This sequence belongs to the YajQ family.

Its function is as follows. Nucleotide-binding protein. This chain is Nucleotide-binding protein Mmcs_0777, found in Mycobacterium sp. (strain MCS).